The chain runs to 885 residues: Chromatin structure-remodeling complex protein RSC3 (885 aa).

The segment at residues 14-42 (CVQCRKRKIGCDRVKPICGNCMKHNKMDC) is a DNA-binding region (zn(2)-C6 fungal-type). Phosphoserine occurs at positions 95 and 236.

In terms of assembly, forms a heteromer with RSC30. Interacts with LDB7 and NPL6. Component of the two forms of the RSC complex composed of at least either RSC1 or RSC2, and ARP7, ARP9, LDB7, NPL6, RSC3, RSC30, RSC4, RSC58, RSC6, RSC8, RSC9, SFH1, STH1, HTL1 and probably RTT102. The complexes interact with histone and histone variant components of centromeric chromatin. Component of a fungal-specific module (HTL1-LDB7-NPL6-RSC3-RSC30) within the RSC complex.

The protein resides in the nucleus. Its function is as follows. Component of the chromatin structure-remodeling complex (RSC), which is involved in transcription regulation and nucleosome positioning. RSC is responsible for the transfer of a histone octamer from a nucleosome core particle to naked DNA. The reaction requires ATP and involves an activated RSC-nucleosome intermediate. Remodeling reaction also involves DNA translocation, DNA twist and conformational change. As a reconfigurer of centromeric and flanking nucleosomes, RSC complex is required both for proper kinetochore function in chromosome segregation and, via a PKC1-dependent signaling pathway, for organization of the cellular cytoskeleton. This subunit is required for transcription of ribosomal protein genes and genes involved in the integrity of the cell wall, and also for proper metaphase progression. Together with HTL1, LDB7, NPL6, RSC30 components, defines a fungal-specific module within the RSC complex that plays a role in many cellular functions including the maintenance of cell wall integrity. The sequence is that of Chromatin structure-remodeling complex protein RSC3 (RSC3) from Saccharomyces cerevisiae (strain ATCC 204508 / S288c) (Baker's yeast).